Here is a 278-residue protein sequence, read N- to C-terminus: Small ribosomal subunit protein uS2 (278 aa).

Residues 235 to 278 (QRRKDHGEGGQQAAGGGRGQRDEINVYQGGRGGRGGGPRQQQAS) are disordered. Gly residues-rich tracts occupy residues 243-252 (GGQQAAGGGR) and 263-272 (GGRGGRGGGP).

Belongs to the universal ribosomal protein uS2 family.

This Sorangium cellulosum (strain So ce56) (Polyangium cellulosum (strain So ce56)) protein is Small ribosomal subunit protein uS2.